A 120-amino-acid polypeptide reads, in one-letter code: Large ribosomal subunit protein bL19 (120 aa).

It belongs to the bacterial ribosomal protein bL19 family.

Its function is as follows. This protein is located at the 30S-50S ribosomal subunit interface and may play a role in the structure and function of the aminoacyl-tRNA binding site. The chain is Large ribosomal subunit protein bL19 from Renibacterium salmoninarum (strain ATCC 33209 / DSM 20767 / JCM 11484 / NBRC 15589 / NCIMB 2235).